The primary structure comprises 623 residues: 1-deoxy-D-xylulose-5-phosphate synthase (623 aa).

Residues histidine 80 and 121–123 (GHS) contribute to the thiamine diphosphate site. Position 152 (aspartate 152) interacts with Mg(2+). Residues 153–154 (GA), asparagine 181, tyrosine 289, and glutamate 372 contribute to the thiamine diphosphate site. Asparagine 181 contacts Mg(2+).

This sequence belongs to the transketolase family. DXPS subfamily. Homodimer. Mg(2+) serves as cofactor. Requires thiamine diphosphate as cofactor.

The enzyme catalyses D-glyceraldehyde 3-phosphate + pyruvate + H(+) = 1-deoxy-D-xylulose 5-phosphate + CO2. Its pathway is metabolic intermediate biosynthesis; 1-deoxy-D-xylulose 5-phosphate biosynthesis; 1-deoxy-D-xylulose 5-phosphate from D-glyceraldehyde 3-phosphate and pyruvate: step 1/1. Functionally, catalyzes the acyloin condensation reaction between C atoms 2 and 3 of pyruvate and glyceraldehyde 3-phosphate to yield 1-deoxy-D-xylulose-5-phosphate (DXP). This Baumannia cicadellinicola subsp. Homalodisca coagulata protein is 1-deoxy-D-xylulose-5-phosphate synthase.